The chain runs to 137 residues: Small heat shock protein IbpA (137 aa).

The region spanning 28-137 (SQSNGGYPPY…AKKPRRIEIN (110 aa)) is the sHSP domain.

It belongs to the small heat shock protein (HSP20) family. In terms of assembly, monomer. Forms homomultimers of about 100-150 subunits at optimal growth temperatures. Conformation changes to monomers at high temperatures or high ionic concentrations.

It localises to the cytoplasm. Functionally, associates with aggregated proteins, together with IbpB, to stabilize and protect them from irreversible denaturation and extensive proteolysis during heat shock and oxidative stress. Aggregated proteins bound to the IbpAB complex are more efficiently refolded and reactivated by the ATP-dependent chaperone systems ClpB and DnaK/DnaJ/GrpE. Its activity is ATP-independent. The chain is Small heat shock protein IbpA from Shigella sonnei (strain Ss046).